Consider the following 425-residue polypeptide: Succinate--CoA ligase [ADP-forming] subunit beta, mitochondrial (425 aa).

Residues 1–14 (NNHGLQIQQQQQRN) constitute a mitochondrion transit peptide. The ATP-grasp domain maps to 23 to 250 (MELLQEAGVS…SNSAYRQKKI (228 aa)). Position 40 is an N6-acetyllysine (K40). Residue Y46 is modified to Phosphotyrosine. At K50 the chain carries N6-acetyllysine; alternate. N6-succinyllysine; alternate is present on K50. Residues K60 and 67 to 69 (GRG) each bind ATP. K91, K101, K105, and K178 each carry N6-acetyllysine. Mg(2+)-binding residues include N220 and D234. S241 is modified (phosphoserine). N285 contributes to the substrate binding site. Residue T303 is modified to Phosphothreonine. K330 is modified (N6-acetyllysine). 342–344 (GIM) serves as a coordination point for substrate. Position 400 is an N6-acetyllysine (K400).

The protein belongs to the succinate/malate CoA ligase beta subunit family. ATP-specific subunit beta subfamily. In terms of assembly, heterodimer of an alpha and a beta subunit. The beta subunit determines specificity for ATP. Interacts with ALAS2. Mg(2+) is required as a cofactor.

It is found in the mitochondrion. The enzyme catalyses succinate + ATP + CoA = succinyl-CoA + ADP + phosphate. It functions in the pathway carbohydrate metabolism; tricarboxylic acid cycle; succinate from succinyl-CoA (ligase route): step 1/1. ATP-specific succinyl-CoA synthetase functions in the citric acid cycle (TCA), coupling the hydrolysis of succinyl-CoA to the synthesis of ATP and thus represents the only step of substrate-level phosphorylation in the TCA. The beta subunit provides nucleotide specificity of the enzyme and binds the substrate succinate, while the binding sites for coenzyme A and phosphate are found in the alpha subunit. The polypeptide is Succinate--CoA ligase [ADP-forming] subunit beta, mitochondrial (Sus scrofa (Pig)).